Consider the following 264-residue polypeptide: Gap junction beta-1 protein (264 aa).

Over 1 to 22 (MNWAGLYAILSGVNRHSTSIGR) the chain is Cytoplasmic. A helical membrane pass occupies residues 23–45 (IWLSVVFIFRIMVLVAAAESVWG). The Extracellular portion of the chain corresponds to 46–75 (DEKSAFTCNTQQPGCNSVCYDHFFPISHIR). A helical membrane pass occupies residues 76 to 98 (LWALQLIIVSTPALLVAMHVAHL). Over 99 to 130 (QHQEKKELRLSRHVKDQELAEVKKHKVKISGT) the chain is Cytoplasmic. Residues 131–153 (LWWTYISSVFFRIIFEAAFMYIF) form a helical membrane-spanning segment. Residues 154–191 (YLIYPGYSMIRLLKCDAYPCPNTVDCFVSRPTEKTIFT) are Extracellular-facing. A helical membrane pass occupies residues 192-214 (VFMLVASGVCIVLNVAEVFFLIA). At 215–264 (QACTRRARRHRDSGSISKEHQQNEMNLLITGGSIIKRSAGQEKGDHCSTS) the chain is on the cytoplasmic side.

Belongs to the connexin family. Beta-type (group I) subfamily. A connexon is composed of a hexamer of connexins. In terms of tissue distribution, lung, liver, intestines, stomach and kidney.

Its subcellular location is the cell membrane. The protein resides in the cell junction. It localises to the gap junction. Functionally, one gap junction consists of a cluster of closely packed pairs of transmembrane channels, the connexons, through which materials of low MW diffuse from one cell to a neighboring cell. The polypeptide is Gap junction beta-1 protein (gjb1) (Xenopus laevis (African clawed frog)).